A 214-amino-acid polypeptide reads, in one-letter code: Holliday junction branch migration complex subunit RuvA (214 aa).

Residues 1–63 are domain I; that stretch reads MIASLSGTVE…EDALTLYGFA (63 aa). The segment at 64-142 is domain II; the sequence is DRDEREVFEV…PTGEPVPGAE (79 aa). Positions 143–151 are flexible linker; sequence AEASDEPAV. Positions 151–214 are domain III; that stretch reads VETVWHADVV…GMAGAVRGGR (64 aa).

This sequence belongs to the RuvA family. In terms of assembly, homotetramer. Forms an RuvA(8)-RuvB(12)-Holliday junction (HJ) complex. HJ DNA is sandwiched between 2 RuvA tetramers; dsDNA enters through RuvA and exits via RuvB. An RuvB hexamer assembles on each DNA strand where it exits the tetramer. Each RuvB hexamer is contacted by two RuvA subunits (via domain III) on 2 adjacent RuvB subunits; this complex drives branch migration. In the full resolvosome a probable DNA-RuvA(4)-RuvB(12)-RuvC(2) complex forms which resolves the HJ.

It is found in the cytoplasm. The RuvA-RuvB-RuvC complex processes Holliday junction (HJ) DNA during genetic recombination and DNA repair, while the RuvA-RuvB complex plays an important role in the rescue of blocked DNA replication forks via replication fork reversal (RFR). RuvA specifically binds to HJ cruciform DNA, conferring on it an open structure. The RuvB hexamer acts as an ATP-dependent pump, pulling dsDNA into and through the RuvAB complex. HJ branch migration allows RuvC to scan DNA until it finds its consensus sequence, where it cleaves and resolves the cruciform DNA. This is Holliday junction branch migration complex subunit RuvA from Micrococcus luteus (strain ATCC 4698 / DSM 20030 / JCM 1464 / CCM 169 / CCUG 5858 / IAM 1056 / NBRC 3333 / NCIMB 9278 / NCTC 2665 / VKM Ac-2230) (Micrococcus lysodeikticus).